A 134-amino-acid chain; its full sequence is Endoribonuclease YbeY (134 aa).

His94, His98, and His104 together coordinate Zn(2+).

This sequence belongs to the endoribonuclease YbeY family. Zn(2+) serves as cofactor.

The protein localises to the cytoplasm. Functionally, single strand-specific metallo-endoribonuclease involved in late-stage 70S ribosome quality control and in maturation of the 3' terminus of the 16S rRNA. The protein is Endoribonuclease YbeY of Campylobacter fetus subsp. fetus (strain 82-40).